The chain runs to 421 residues: UPF0300 protein C737.04 (421 aa).

This sequence belongs to the UPF0300 family.

The protein resides in the cytoplasm. In Schizosaccharomyces pombe (strain 972 / ATCC 24843) (Fission yeast), this protein is UPF0300 protein C737.04.